We begin with the raw amino-acid sequence, 435 residues long: uncharacterized protein (435 aa).

S-adenosyl-L-methionine-binding residues include Q261, Y294, E318, and D366. C393 functions as the Nucleophile in the catalytic mechanism.

This sequence belongs to the class I-like SAM-binding methyltransferase superfamily. RNA M5U methyltransferase family.

This is an uncharacterized protein from Bifidobacterium longum (strain NCC 2705).